A 298-amino-acid polypeptide reads, in one-letter code: Myozenin-1 (298 aa).

Positions 1–34 are disordered; it reads MPLSGTPAPNKKRKSSKLIMELTGGGQESSGLNL. Residue Ser-82 is modified to Phosphoserine. Residues 105–173 are disordered; it reads FSYSKGSSGG…TGTGDQAGGE (69 aa). Positions 118–129 are enriched in low complexity; that stretch reads GSSSAGQYGSGQ. Residues 136–172 show a composition bias toward gly residues; that stretch reads SGSGSGGAGGPGSQTGRGGDAGTTGVGETGTGDQAGG.

Belongs to the myozenin family. In terms of assembly, interacts with ACTN2, ACTN3, FLNA, FLNB, FLNC, LDB3, PPP3CA and TCAP. Interacts via its C-terminal region with MYOT.

It is found in the nucleus. It localises to the cell projection. The protein resides in the pseudopodium. Its function is as follows. Myozenins may serve as intracellular binding proteins involved in linking Z-disk proteins such as alpha-actinin, gamma-filamin, TCAP/telethonin, LDB3/ZASP and localizing calcineurin signaling to the sarcomere. Plays an important role in the modulation of calcineurin signaling. May play a role in myofibrillogenesis. The sequence is that of Myozenin-1 (MYOZ1) from Sus scrofa (Pig).